The sequence spans 905 residues: Transcription termination factor 1 (905 aa).

2 stretches are compositionally biased toward basic and acidic residues: residues 1 to 16 (MEGE…PVSD) and 24 to 33 (IHKERPQKHS). Residues 1-33 (MEGESSRFEIHTPVSDKKKKKCSIHKERPQKHS) are disordered. The N-terminal region (NRD) stretch occupies residues 1-223 (MEGESSRFEI…AHKNKSKKKK (223 aa)). Serine 65 carries the post-translational modification Phosphoserine. A disordered region spans residues 151–443 (SHAHKSEALH…KSRPRQKKTQ (293 aa)). Basic residues-rich tracts occupy residues 163–174 (VREKKNKKHQRK) and 215–226 (HKNKSKKKKKKS). Phosphoserine is present on serine 240. Threonine 248 is subject to Phosphothreonine. Basic residues-rich tracts occupy residues 270-283 (THKK…KKKS), 330-339 (NKSKKKKKKS), and 385-401 (TKKK…KRAR). Phosphoserine is present on serine 403. Residues 410–419 (PSKNSESTLF) are compositionally biased toward polar residues. Residue tyrosine 476 is modified to Phosphotyrosine. 3 positions are modified to phosphoserine: serine 478, serine 481, and serine 487. The segment at 498 to 886 (LQEFIPNIKD…IEKESEGQAP (389 aa)) is may be involved in interaction with ARF. Myb-like domains lie at 612–661 (DVNN…SQIS) and 661–745 (SSQR…TEIL). Lysine 700 participates in a covalent cross-link: Glycyl lysine isopeptide (Lys-Gly) (interchain with G-Cter in SUMO2). Phosphoserine is present on serine 872.

As to quaternary structure, oligomer. The oligomeric structure enables to interact simultaneously with two separate DNA fragments. Interacts with BAZ2A/TIP5. Interacts with CAVIN1. Interacts (via the N-terminal region (NRD) and a C-terminal region) with CDKN2A/ARF; the interaction is direct. Interacts (via C-terminal region) with NPM1/B23.

The protein resides in the nucleus. It localises to the nucleolus. The protein localises to the nucleoplasm. Functionally, multifunctional nucleolar protein that terminates ribosomal gene transcription, mediates replication fork arrest and regulates RNA polymerase I transcription on chromatin. Plays a dual role in rDNA regulation, being involved in both activation and silencing of rDNA transcription. Interaction with BAZ2A/TIP5 recovers DNA-binding activity. The sequence is that of Transcription termination factor 1 (TTF1) from Homo sapiens (Human).